A 473-amino-acid chain; its full sequence is Photosystem II CP43 reaction center protein (473 aa).

Positions 1-14 are excised as a propeptide; it reads MKTLYSLRRFYPVE. Threonine 15 bears the N-acetylthreonine mark. At threonine 15 the chain carries Phosphothreonine. 5 helical membrane-spanning segments follow: residues 69-93, 134-155, 178-200, 255-275, and 291-312; these read LFEV…PHLA, LLGP…KDRN, KALY…RKIT, KPFA…LSYS, and WFNN…ASQA. A [CaMn4O5] cluster-binding site is contributed by glutamate 367. A helical transmembrane segment spans residues 447–471; it reads RARAAAAGFEKGIDRDFEPVLSMTP.

The protein belongs to the PsbB/PsbC family. PsbC subfamily. PSII is composed of 1 copy each of membrane proteins PsbA, PsbB, PsbC, PsbD, PsbE, PsbF, PsbH, PsbI, PsbJ, PsbK, PsbL, PsbM, PsbT, PsbX, PsbY, PsbZ, Psb30/Ycf12, at least 3 peripheral proteins of the oxygen-evolving complex and a large number of cofactors. It forms dimeric complexes. Requires Binds multiple chlorophylls and provides some of the ligands for the Ca-4Mn-5O cluster of the oxygen-evolving complex. It may also provide a ligand for a Cl- that is required for oxygen evolution. PSII binds additional chlorophylls, carotenoids and specific lipids. as cofactor.

Its subcellular location is the plastid. It localises to the chloroplast thylakoid membrane. Its function is as follows. One of the components of the core complex of photosystem II (PSII). It binds chlorophyll and helps catalyze the primary light-induced photochemical processes of PSII. PSII is a light-driven water:plastoquinone oxidoreductase, using light energy to abstract electrons from H(2)O, generating O(2) and a proton gradient subsequently used for ATP formation. The polypeptide is Photosystem II CP43 reaction center protein (Eucalyptus globulus subsp. globulus (Tasmanian blue gum)).